We begin with the raw amino-acid sequence, 486 residues long: Pentatricopeptide repeat-containing protein At3g06430, chloroplastic (486 aa).

Residues 1–36 (MASMSLSFSSSLCSSRIPEGKRRFRHRDVGIVRCVL) constitute a chloroplast transit peptide. PPR repeat units lie at residues 123–157 (KEGT…GLEP), 158–188 (TVEL…MKSF), 194–228 (DVFT…LITP), 229–264 (NTVT…ACKP), 265–299 (DVWT…GIEP), 300–334 (ETRT…EFPW), 335–369 (TTST…GMKA), 370–404 (DTKT…EIPE), 405–439 (NTAF…QCVC), and 440–470 (DSRT…RQKL).

This sequence belongs to the PPR family. P subfamily.

The protein localises to the plastid. Its subcellular location is the chloroplast. The chain is Pentatricopeptide repeat-containing protein At3g06430, chloroplastic (EMB2750) from Arabidopsis thaliana (Mouse-ear cress).